Consider the following 361-residue polypeptide: Chorismate synthase (361 aa).

R48 and R54 together coordinate NADP(+). Residues 125–127 (RSS), 238–239 (NA), G278, 293–297 (KPTSS), and R319 each bind FMN.

This sequence belongs to the chorismate synthase family. Homotetramer. The cofactor is FMNH2.

The catalysed reaction is 5-O-(1-carboxyvinyl)-3-phosphoshikimate = chorismate + phosphate. It functions in the pathway metabolic intermediate biosynthesis; chorismate biosynthesis; chorismate from D-erythrose 4-phosphate and phosphoenolpyruvate: step 7/7. Functionally, catalyzes the anti-1,4-elimination of the C-3 phosphate and the C-6 proR hydrogen from 5-enolpyruvylshikimate-3-phosphate (EPSP) to yield chorismate, which is the branch point compound that serves as the starting substrate for the three terminal pathways of aromatic amino acid biosynthesis. This reaction introduces a second double bond into the aromatic ring system. This is Chorismate synthase from Methylobacillus flagellatus (strain ATCC 51484 / DSM 6875 / VKM B-1610 / KT).